The sequence spans 407 residues: Imidazolonepropionase (407 aa).

Residues histidine 72 and histidine 74 each coordinate Fe(3+). The Zn(2+) site is built by histidine 72 and histidine 74. 4-imidazolone-5-propanoate is bound by residues arginine 81, tyrosine 144, and histidine 177. N-formimidoyl-L-glutamate is bound at residue tyrosine 144. Histidine 242 provides a ligand contact to Fe(3+). Histidine 242 contributes to the Zn(2+) binding site. A 4-imidazolone-5-propanoate-binding site is contributed by glutamine 245. Residue aspartate 317 coordinates Fe(3+). A Zn(2+)-binding site is contributed by aspartate 317. N-formimidoyl-L-glutamate is bound by residues asparagine 319 and glycine 321. 4-imidazolone-5-propanoate is bound at residue threonine 322.

Belongs to the metallo-dependent hydrolases superfamily. HutI family. The cofactor is Zn(2+). Requires Fe(3+) as cofactor.

Its subcellular location is the cytoplasm. It catalyses the reaction 4-imidazolone-5-propanoate + H2O = N-formimidoyl-L-glutamate. The protein operates within amino-acid degradation; L-histidine degradation into L-glutamate; N-formimidoyl-L-glutamate from L-histidine: step 3/3. Its function is as follows. Catalyzes the hydrolytic cleavage of the carbon-nitrogen bond in imidazolone-5-propanoate to yield N-formimidoyl-L-glutamate. It is the third step in the universal histidine degradation pathway. The protein is Imidazolonepropionase of Aliivibrio salmonicida (strain LFI1238) (Vibrio salmonicida (strain LFI1238)).